The chain runs to 354 residues: Arginase-2, mitochondrial (354 aa).

A mitochondrion-targeting transit peptide spans 1 to 22; it reads MSYGSCVSRLLRTRVQSVLKKS. The Mn(2+) site is built by H120, D143, H145, and D147. Residues 145-149, 156-158, and D202 each bind substrate; these read HADIN and SGN. Residues D251 and D253 each contribute to the Mn(2+) site. 2 residues coordinate substrate: T265 and E296. The tract at residues 330–354 is disordered; that stretch reads GHTVYEQLPPPSSPHESENAERVRI. The span at 344–354 shows a compositional bias: basic and acidic residues; it reads HESENAERVRI.

It belongs to the arginase family. As to quaternary structure, homotrimer. Mn(2+) serves as cofactor.

Its subcellular location is the mitochondrion. It carries out the reaction L-arginine + H2O = urea + L-ornithine. It functions in the pathway nitrogen metabolism; urea cycle; L-ornithine and urea from L-arginine: step 1/1. Its function is as follows. May play a role in the regulation of extra-urea cycle arginine metabolism and also in down-regulation of nitric oxide synthesis. Extrahepatic arginase functions to regulate L-arginine bioavailability to nitric oxid synthase (NOS). Arginine metabolism is a critical regulator of innate and adaptive immune responses. Seems to be involved in negative regulation of the survival capacity of activated T cells. May suppress inflammation-related signaling in asthmatic airway epithelium. May play a role in promoting prenatal immune suppression. Regulates RPS6KB1 signaling, which promotes endothelial cell senescence and inflammation and implicates NOS3/eNOS dysfunction. Can inhibit endothelial autophagy independently of its enzymatic activity implicating mTORC2 signaling. Involved in vascular smooth muscle cell senescence and apoptosis independently of its enzymatic activity. This chain is Arginase-2, mitochondrial (ARG2), found in Oryctolagus cuniculus (Rabbit).